A 630-amino-acid polypeptide reads, in one-letter code: 1-deoxy-D-xylulose-5-phosphate synthase (630 aa).

Thiamine diphosphate is bound by residues H72 and 113-115; that span reads GHS. D144 lines the Mg(2+) pocket. Thiamine diphosphate is bound by residues 145-146, N173, Y284, and E367; that span reads GA. Residue N173 coordinates Mg(2+).

Belongs to the transketolase family. DXPS subfamily. In terms of assembly, homodimer. It depends on Mg(2+) as a cofactor. Thiamine diphosphate is required as a cofactor.

The enzyme catalyses D-glyceraldehyde 3-phosphate + pyruvate + H(+) = 1-deoxy-D-xylulose 5-phosphate + CO2. Its pathway is metabolic intermediate biosynthesis; 1-deoxy-D-xylulose 5-phosphate biosynthesis; 1-deoxy-D-xylulose 5-phosphate from D-glyceraldehyde 3-phosphate and pyruvate: step 1/1. Its function is as follows. Catalyzes the acyloin condensation reaction between C atoms 2 and 3 of pyruvate and glyceraldehyde 3-phosphate to yield 1-deoxy-D-xylulose-5-phosphate (DXP). This chain is 1-deoxy-D-xylulose-5-phosphate synthase, found in Geobacillus thermodenitrificans (strain NG80-2).